Reading from the N-terminus, the 208-residue chain is UPF0637 protein BCG9842_B1177 (208 aa).

This sequence belongs to the UPF0637 family.

This chain is UPF0637 protein BCG9842_B1177, found in Bacillus cereus (strain G9842).